The primary structure comprises 216 residues: 3-keto-L-gulonate-6-phosphate decarboxylase UlaD (216 aa).

A substrate-binding site is contributed by Asp11. Mg(2+) is bound by residues Glu33 and Asp62. Residue Arg192 coordinates substrate.

This sequence belongs to the HPS/KGPDC family. KGPDC subfamily. In terms of assembly, homodimer. It depends on Mg(2+) as a cofactor.

The catalysed reaction is 3-dehydro-L-gulonate 6-phosphate + H(+) = L-xylulose 5-phosphate + CO2. It participates in cofactor degradation; L-ascorbate degradation; D-xylulose 5-phosphate from L-ascorbate: step 2/4. In terms of biological role, catalyzes the decarboxylation of 3-keto-L-gulonate-6-P into L-xylulose-5-P. Is involved in the anaerobic L-ascorbate utilization. This Escherichia coli O127:H6 (strain E2348/69 / EPEC) protein is 3-keto-L-gulonate-6-phosphate decarboxylase UlaD.